We begin with the raw amino-acid sequence, 424 residues long: Serine--tRNA ligase (424 aa).

L-serine is bound at residue 232-234 (TAE). 263 to 265 (RRE) serves as a coordination point for ATP. L-serine is bound at residue Glu-286. 350–353 (EISS) contacts ATP. Ser-384 provides a ligand contact to L-serine.

The protein belongs to the class-II aminoacyl-tRNA synthetase family. Type-1 seryl-tRNA synthetase subfamily. Homodimer. The tRNA molecule binds across the dimer.

The protein resides in the cytoplasm. It catalyses the reaction tRNA(Ser) + L-serine + ATP = L-seryl-tRNA(Ser) + AMP + diphosphate + H(+). The enzyme catalyses tRNA(Sec) + L-serine + ATP = L-seryl-tRNA(Sec) + AMP + diphosphate + H(+). It functions in the pathway aminoacyl-tRNA biosynthesis; selenocysteinyl-tRNA(Sec) biosynthesis; L-seryl-tRNA(Sec) from L-serine and tRNA(Sec): step 1/1. Functionally, catalyzes the attachment of serine to tRNA(Ser). Is also able to aminoacylate tRNA(Sec) with serine, to form the misacylated tRNA L-seryl-tRNA(Sec), which will be further converted into selenocysteinyl-tRNA(Sec). This Prochlorococcus marinus subsp. pastoris (strain CCMP1986 / NIES-2087 / MED4) protein is Serine--tRNA ligase.